The primary structure comprises 155 residues: Ribonuclease H (155 aa).

One can recognise an RNase H type-1 domain in the interval 7–150 (AQNAVDLYTD…ADKLACKGRD (144 aa)). Positions 16, 54, 77, and 142 each coordinate Mg(2+).

This sequence belongs to the RNase H family. In terms of assembly, monomer. The cofactor is Mg(2+).

It is found in the cytoplasm. The catalysed reaction is Endonucleolytic cleavage to 5'-phosphomonoester.. Functionally, endonuclease that specifically degrades the RNA of RNA-DNA hybrids. This is Ribonuclease H from Saccharopolyspora erythraea (strain ATCC 11635 / DSM 40517 / JCM 4748 / NBRC 13426 / NCIMB 8594 / NRRL 2338).